Reading from the N-terminus, the 289-residue chain is ATP phosphoribosyltransferase (289 aa).

It belongs to the ATP phosphoribosyltransferase family. Long subfamily. Mg(2+) serves as cofactor.

It is found in the cytoplasm. It catalyses the reaction 1-(5-phospho-beta-D-ribosyl)-ATP + diphosphate = 5-phospho-alpha-D-ribose 1-diphosphate + ATP. It participates in amino-acid biosynthesis; L-histidine biosynthesis; L-histidine from 5-phospho-alpha-D-ribose 1-diphosphate: step 1/9. Its activity is regulated as follows. Feedback inhibited by histidine. In terms of biological role, catalyzes the condensation of ATP and 5-phosphoribose 1-diphosphate to form N'-(5'-phosphoribosyl)-ATP (PR-ATP). Has a crucial role in the pathway because the rate of histidine biosynthesis seems to be controlled primarily by regulation of HisG enzymatic activity. This is ATP phosphoribosyltransferase from Methanosarcina mazei (strain ATCC BAA-159 / DSM 3647 / Goe1 / Go1 / JCM 11833 / OCM 88) (Methanosarcina frisia).